Consider the following 667-residue polypeptide: Transketolase (667 aa).

Residue His-27 coordinates substrate. Thiamine diphosphate is bound by residues His-67 and 115–117 (GPL). Asp-156 is a binding site for Mg(2+). Thiamine diphosphate is bound by residues Gly-157 and Asn-186. Asn-186 and Ile-188 together coordinate Mg(2+). Positions 262, 357, and 384 each coordinate substrate. His-262 contributes to the thiamine diphosphate binding site. The active-site Proton donor is Glu-411. A thiamine diphosphate-binding site is contributed by Phe-437. Substrate is bound by residues His-461, Asp-469, and Arg-520.

This sequence belongs to the transketolase family. Homodimer. Requires Mg(2+) as cofactor. It depends on Ca(2+) as a cofactor. The cofactor is Mn(2+). Co(2+) is required as a cofactor. Thiamine diphosphate serves as cofactor.

The catalysed reaction is D-sedoheptulose 7-phosphate + D-glyceraldehyde 3-phosphate = aldehydo-D-ribose 5-phosphate + D-xylulose 5-phosphate. Its function is as follows. Catalyzes the transfer of a two-carbon ketol group from a ketose donor to an aldose acceptor, via a covalent intermediate with the cofactor thiamine pyrophosphate. This chain is Transketolase (tkt), found in Bacillus subtilis (strain 168).